Reading from the N-terminus, the 644-residue chain is Phosphatidylinositol polyphosphate 5-phosphatase type IV (644 aa).

Residues 1–193 are disordered; the sequence is MPSKAENLRP…RLPSLLPPRP (193 aa). 8 tandem repeats follow at residues 10 to 13, 15 to 18, 28 to 31, 39 to 42, 55 to 58, 69 to 71, 72 to 74, and 75 to 78. Positions 10-242 are 13 X 4 AA repeats of P-X-X-P; sequence PSEPAPQPPE…SLGPGRPRSP (233 aa). Basic and acidic residues predominate over residues 78–90; that stretch reads PRLERALSLDDKG. Serine 99 is modified (phosphoserine). The segment covering 107–118 has biased composition (polar residues); it reads NGTSPSRGSVQS. Copy 9 of the repeat occupies 121 to 124; that stretch reads PGAP. The span at 152–163 shows a compositional bias: low complexity; the sequence is GSPSSGGNPLSG. 4 tandem repeats follow at residues 169-172, 183-185, 190-193, and 236-239. A phosphoserine mark is found at serine 241 and serine 256. Position 641 is a cysteine methyl ester (cysteine 641). A lipid anchor (S-farnesyl cysteine) is attached at cysteine 641. The propeptide at 642–644 is removed in mature form; sequence SVS.

The protein belongs to the inositol polyphosphate 5-phosphatase family. Interacts (when prenylated) with PDE6D; this is important for normal location in cilia.

Its subcellular location is the cytoplasm. It localises to the cytoskeleton. The protein localises to the cilium axoneme. The protein resides in the golgi apparatus. It is found in the golgi stack membrane. Its subcellular location is the cell membrane. It localises to the cell projection. The protein localises to the ruffle. The protein resides in the nucleus. The catalysed reaction is a 1,2-diacyl-sn-glycero-3-phospho-(1D-myo-inositol-4,5-bisphosphate) + H2O = a 1,2-diacyl-sn-glycero-3-phospho-(1D-myo-inositol 4-phosphate) + phosphate. It catalyses the reaction a 1,2-diacyl-sn-glycero-3-phospho-(1D-myo-inositol-3,4,5-trisphosphate) + H2O = a 1,2-diacyl-sn-glycero-3-phospho-(1D-myo-inositol-3,4-bisphosphate) + phosphate. The enzyme catalyses a 1,2-diacyl-sn-glycero-3-phospho-(1D-myo-inositol-3,5-bisphosphate) + H2O = a 1,2-diacyl-sn-glycero-3-phospho-(1D-myo-inositol-3-phosphate) + phosphate. Phosphatidylinositol (PtdIns) phosphatase that specifically hydrolyzes the 5-phosphate of phosphatidylinositol-3,4,5-trisphosphate (PtdIns(3,4,5)P3), phosphatidylinositol 4,5-bisphosphate(PtdIns(4,5)P2) and phosphatidylinositol 3,5-bisphosphate (PtdIns(3,5)P2). Specific for lipid substrates, inactive towards water soluble inositol phosphates. Plays an essential role in the primary cilium by controlling ciliary growth and phosphoinositide 3-kinase (PI3K) signaling and stability. This is Phosphatidylinositol polyphosphate 5-phosphatase type IV (INPP5E) from Pan troglodytes (Chimpanzee).